A 173-amino-acid polypeptide reads, in one-letter code: Calcium-binding protein 5 (173 aa).

4 consecutive EF-hand domains span residues 28–63 (DELDELREAFLEFDKDQDGFISYKDLGNLMRTMGYM), 82–99 (GRVDFEDFVELMTPKLLA), 105–140 (IGVQEMRDAFKEFDANGDGEITLAELQQAMQRLLGE), and 142–173 (LTPREIAEVVQEADINGDGTVDFEEFVKMMSR). Ca(2+) is bound by residues aspartate 41, aspartate 43, aspartate 45, and aspartate 52. The Ca(2+) site is built by aspartate 118, asparagine 120, aspartate 122, glutamate 124, glutamate 129, aspartate 155, asparagine 157, aspartate 159, threonine 161, and glutamate 166.

Interacts with CACNA1C (via C-terminal CDB motif) in a calcium-dependent manner. Interacts with STXBP1. Interacts with MYO6. As to expression, expressed in inner and outer plexiform layers of the retina, and retinal bipolar cells (at protein level). Expressed in the inner hair cells (IHC) of the cochlea.

The protein resides in the cytoplasm. Its function is as follows. Inhibits calcium-dependent inactivation of L-type calcium channel and shifts voltage dependence of activation to more depolarized membrane potentials. Involved in the transmission of light signals. May positively regulate neurotransmitter vesicle endocytosis and exocytosis in a salt-dependent manner. May play a role in the extension and network organization of neurites. The protein is Calcium-binding protein 5 (Cabp5) of Mus musculus (Mouse).